A 274-amino-acid polypeptide reads, in one-letter code: Formamidopyrimidine-DNA glycosylase (274 aa).

Residue Pro2 is the Schiff-base intermediate with DNA of the active site. Residue Glu3 is the Proton donor of the active site. Residue Lys58 is the Proton donor; for beta-elimination activity of the active site. DNA contacts are provided by His91, Arg110, and Lys152. The segment at 237 to 271 (KVYGRKNLPCLVCENKIETVVIAGRHSAFCPHCQP) adopts an FPG-type zinc-finger fold. The Proton donor; for delta-elimination activity role is filled by Arg261.

This sequence belongs to the FPG family. In terms of assembly, monomer. Zn(2+) serves as cofactor.

The enzyme catalyses Hydrolysis of DNA containing ring-opened 7-methylguanine residues, releasing 2,6-diamino-4-hydroxy-5-(N-methyl)formamidopyrimidine.. It carries out the reaction 2'-deoxyribonucleotide-(2'-deoxyribose 5'-phosphate)-2'-deoxyribonucleotide-DNA = a 3'-end 2'-deoxyribonucleotide-(2,3-dehydro-2,3-deoxyribose 5'-phosphate)-DNA + a 5'-end 5'-phospho-2'-deoxyribonucleoside-DNA + H(+). Its function is as follows. Involved in base excision repair of DNA damaged by oxidation or by mutagenic agents. Acts as a DNA glycosylase that recognizes and removes damaged bases. Has a preference for oxidized purines, such as 7,8-dihydro-8-oxoguanine (8-oxoG). Has AP (apurinic/apyrimidinic) lyase activity and introduces nicks in the DNA strand. Cleaves the DNA backbone by beta-delta elimination to generate a single-strand break at the site of the removed base with both 3'- and 5'-phosphates. The chain is Formamidopyrimidine-DNA glycosylase from Legionella pneumophila subsp. pneumophila (strain Philadelphia 1 / ATCC 33152 / DSM 7513).